A 322-amino-acid chain; its full sequence is MSKKNYYLLSEGILKRKENTIYFVNEKGSKPLPINKIYSMYAYGQITISSQVISLFAKEGIPIHFFNYYGYYNGSFYPRESLLSGDLLIKQAEHNIDFSKRLKLAKLFVEGAAKNILKVLAYYKIENNIKNTLTELNESSKITEVMNVEGRIRAEYYQYFDDILPDEFKMEGRSRQPPTNMINSLISFGNSMMYASVITELYNTQLNPTISYLHEPAERRFSLALDLSEIFKPIIVDRVIFYLVNKKMITEKDFNQDLNCCLLNDKGRATFVKEYNKRLETTIKHKDLGRKVSYQRLIRLEAYKLKKHVFGMKEYDPFVIWW.

Residues glutamate 149, histidine 214, and glutamate 229 each coordinate Mn(2+).

The protein belongs to the CRISPR-associated endonuclease Cas1 family. As to quaternary structure, homodimer, forms a heterotetramer with a Cas2 homodimer. Mg(2+) is required as a cofactor. Mn(2+) serves as cofactor.

Functionally, CRISPR (clustered regularly interspaced short palindromic repeat), is an adaptive immune system that provides protection against mobile genetic elements (viruses, transposable elements and conjugative plasmids). CRISPR clusters contain spacers, sequences complementary to antecedent mobile elements, and target invading nucleic acids. CRISPR clusters are transcribed and processed into CRISPR RNA (crRNA). Acts as a dsDNA endonuclease. Involved in the integration of spacer DNA into the CRISPR cassette. The chain is CRISPR-associated protein Cas1 1 from Methanobrevibacter ruminantium (strain ATCC 35063 / DSM 1093 / JCM 13430 / OCM 146 / M1) (Methanobacterium ruminantium).